The sequence spans 161 residues: Nucleotide-binding protein RC1_3464 (161 aa).

This sequence belongs to the YajQ family.

Its function is as follows. Nucleotide-binding protein. The polypeptide is Nucleotide-binding protein RC1_3464 (Rhodospirillum centenum (strain ATCC 51521 / SW)).